The sequence spans 387 residues: Patatin-02 (387 aa).

The signal sequence occupies residues Met-1 to Ala-23. In terms of domain architecture, PNPLA spans Leu-32–Val-230. The GXGXXG signature appears at Gly-36 to Gly-41. The GXSXG motif lies at Gly-75–Gly-79. Ser-77 (nucleophile) is an active-site residue. Asn-115 carries an N-linked (GlcNAc...) asparagine glycan. Asp-216 functions as the Proton acceptor in the catalytic mechanism. The short motif at Asp-216–Ala-218 is the DGA/G element. A coiled-coil region spans residues Glu-361–Ala-385.

The protein belongs to the patatin family. In terms of tissue distribution, tuber and stolon.

The protein resides in the vacuole. Functionally, probable lipolytic acyl hydrolase (LAH), an activity which is thought to be involved in the response of tubers to pathogens. The chain is Patatin-02 from Solanum tuberosum (Potato).